The primary structure comprises 462 residues: tRNA-2-methylthio-N(6)-dimethylallyladenosine synthase (462 aa).

Residues 1 to 116 form the MTTase N-terminal domain; the sequence is MKLFIQTLGC…ITQVLERPKA (116 aa). The [4Fe-4S] cluster site is built by cysteine 10, cysteine 47, cysteine 79, cysteine 148, cysteine 152, and cysteine 155. One can recognise a Radical SAM core domain in the interval 134-370; it reads QGMGIKAHLN…NLHKEILSKK (237 aa). Positions 372-436 constitute a TRAM domain; the sequence is QLEIGRIHNV…GGGLMGRFIN (65 aa).

The protein belongs to the methylthiotransferase family. MiaB subfamily. As to quaternary structure, monomer. It depends on [4Fe-4S] cluster as a cofactor.

It is found in the cytoplasm. It catalyses the reaction N(6)-dimethylallyladenosine(37) in tRNA + (sulfur carrier)-SH + AH2 + 2 S-adenosyl-L-methionine = 2-methylsulfanyl-N(6)-dimethylallyladenosine(37) in tRNA + (sulfur carrier)-H + 5'-deoxyadenosine + L-methionine + A + S-adenosyl-L-homocysteine + 2 H(+). Functionally, catalyzes the methylthiolation of N6-(dimethylallyl)adenosine (i(6)A), leading to the formation of 2-methylthio-N6-(dimethylallyl)adenosine (ms(2)i(6)A) at position 37 in tRNAs that read codons beginning with uridine. This chain is tRNA-2-methylthio-N(6)-dimethylallyladenosine synthase, found in Helicobacter hepaticus (strain ATCC 51449 / 3B1).